A 334-amino-acid polypeptide reads, in one-letter code: N-acetylmuramoyl-L-alanine amidase sle1 (334 aa).

Residues 1 to 25 (MQKKVIAAIIGTSAISAVAATQANA) form the signal peptide. Positions 27–70 (TTHTVKPGESVWAISNKYGISIAKLKSLNNLTSNLIFPNQVLKV) constitute a LysM 1 domain. Residues 71 to 86 (SGSSNSTSNSSRPSTN) show a composition bias toward low complexity. The tract at residues 71 to 90 (SGSSNSTSNSSRPSTNSGGG) is disordered. 2 consecutive LysM domains span residues 91–134 (SYYT…KLKV) and 158–201 (SYYT…KLKV). A Peptidase C51 domain is found at 210 to 334 (GSATTTNRGY…YQVNNYRYIH (125 aa)).

It localises to the secreted. Its subcellular location is the cell surface. It carries out the reaction Hydrolyzes the link between N-acetylmuramoyl residues and L-amino acid residues in certain cell-wall glycopeptides.. Functionally, peptidoglycan hydrolase involved in the splitting of the septum during cell division. This Staphylococcus aureus (strain USA300) protein is N-acetylmuramoyl-L-alanine amidase sle1 (sle1).